Here is a 164-residue protein sequence, read N- to C-terminus: Aspartate carbamoyltransferase regulatory chain (164 aa).

Residues Cys-116, Cys-121, Cys-146, and Cys-149 each contribute to the Zn(2+) site.

This sequence belongs to the PyrI family. In terms of assembly, contains catalytic and regulatory chains. The cofactor is Zn(2+).

Its function is as follows. Involved in allosteric regulation of aspartate carbamoyltransferase. In Staphylothermus marinus (strain ATCC 43588 / DSM 3639 / JCM 9404 / F1), this protein is Aspartate carbamoyltransferase regulatory chain.